A 326-amino-acid polypeptide reads, in one-letter code: ATP-dependent 6-phosphofructokinase (326 aa).

Residue Gly12 coordinates ATP. 22-26 contributes to the ADP binding site; sequence RAIIK. ATP-binding positions include 73–74 and 103–106; these read RF and GDGS. Residue Asp104 coordinates Mg(2+). 126–128 is a substrate binding site; the sequence is TID. Asp128 acts as the Proton acceptor in catalysis. Arg155 contributes to the ADP binding site. Residues Arg163 and 170–172 each bind substrate; that span reads MGH. Residues 186–188, Lys212, and 215–217 contribute to the ADP site; these read GSE and KRS. Residues Glu224, Lys246, and 252–255 each bind substrate; that span reads HIQR.

It belongs to the phosphofructokinase type A (PFKA) family. ATP-dependent PFK group I subfamily. Prokaryotic clade 'B1' sub-subfamily. In terms of assembly, homotetramer. Mg(2+) serves as cofactor.

Its subcellular location is the cytoplasm. The enzyme catalyses beta-D-fructose 6-phosphate + ATP = beta-D-fructose 1,6-bisphosphate + ADP + H(+). The protein operates within carbohydrate degradation; glycolysis; D-glyceraldehyde 3-phosphate and glycerone phosphate from D-glucose: step 3/4. With respect to regulation, allosterically activated by ADP and other diphosphonucleosides, and allosterically inhibited by phosphoenolpyruvate. Functionally, catalyzes the phosphorylation of D-fructose 6-phosphate to fructose 1,6-bisphosphate by ATP, the first committing step of glycolysis. In Mycoplasmopsis pulmonis (strain UAB CTIP) (Mycoplasma pulmonis), this protein is ATP-dependent 6-phosphofructokinase.